We begin with the raw amino-acid sequence, 177 residues long: Peptidoglycan-associated lipoprotein (177 aa).

The signal sequence occupies residues 1-32 (MSRTNISALSPMQKLARNPAVIAMTLALALAG). A lipid anchor (N-palmitoyl cysteine) is attached at cysteine 33. Cysteine 33 carries S-diacylglycerol cysteine lipidation. The region spanning 59–176 (QQDFTVNVGD…RAVTVLGGAG (118 aa)) is the OmpA-like domain.

The protein belongs to the Pal lipoprotein family. The Tol-Pal system is composed of five core proteins: the inner membrane proteins TolA, TolQ and TolR, the periplasmic protein TolB and the outer membrane protein Pal. They form a network linking the inner and outer membranes and the peptidoglycan layer.

It localises to the cell outer membrane. Part of the Tol-Pal system, which plays a role in outer membrane invagination during cell division and is important for maintaining outer membrane integrity. This Agrobacterium fabrum (strain C58 / ATCC 33970) (Agrobacterium tumefaciens (strain C58)) protein is Peptidoglycan-associated lipoprotein.